The sequence spans 145 residues: D-aminoacyl-tRNA deacylase (145 aa).

Positions 137–138 (GP) match the Gly-cisPro motif, important for rejection of L-amino acids motif.

This sequence belongs to the DTD family. In terms of assembly, homodimer.

It localises to the cytoplasm. The catalysed reaction is glycyl-tRNA(Ala) + H2O = tRNA(Ala) + glycine + H(+). It carries out the reaction a D-aminoacyl-tRNA + H2O = a tRNA + a D-alpha-amino acid + H(+). An aminoacyl-tRNA editing enzyme that deacylates mischarged D-aminoacyl-tRNAs. Also deacylates mischarged glycyl-tRNA(Ala), protecting cells against glycine mischarging by AlaRS. Acts via tRNA-based rather than protein-based catalysis; rejects L-amino acids rather than detecting D-amino acids in the active site. By recycling D-aminoacyl-tRNA to D-amino acids and free tRNA molecules, this enzyme counteracts the toxicity associated with the formation of D-aminoacyl-tRNA entities in vivo and helps enforce protein L-homochirality. This Pseudomonas putida (strain ATCC 47054 / DSM 6125 / CFBP 8728 / NCIMB 11950 / KT2440) protein is D-aminoacyl-tRNA deacylase.